Consider the following 427-residue polypeptide: MTWFIDRRLNGKNKSMVNRQRFLRRYKAQIKQSISEAINKRSVTDVDSGESVSIPTEDISEPMFHQGRGGLRHRVHPGNDHFVQNDRIERPQGGGGGSGSGQGQASQDGEGQDEFVFQISKDEYLDLLFEDLALPNLKQNQQRQLTEYKTHRAGYTANGVPANISVVRSLQNSLARRTAMTAGKRRELHALEENLAIISNSEPAQLLEEERLRKEIAELRAKIERVPFIDTFDLRYKNYEKRPDPSSQAVMFCLMDVSGSMDQSTKDMAKRFYILLYLFLSRTYKNVEVVYIRHHTQAKEVDEHEFFYSQETGGTIVSSALKLMDEVVKERYNPAQWNIYAAQASDGDNWADDSPLCHEILAKKLLPVVRYYSYIEITRRAHQTLWREYEHLQSTFDNFAMQHIRDQDDIYPVFRELFHKQNATAKD.

A compositionally biased stretch (basic and acidic residues) spans 79-90 (NDHFVQNDRIER). A disordered region spans residues 79–110 (NDHFVQNDRIERPQGGGGGSGSGQGQASQDGE). Residues 92-102 (QGGGGGSGSGQ) show a composition bias toward gly residues.

This sequence belongs to the UPF0229 family.

The protein is UPF0229 protein YeaH of Escherichia coli O139:H28 (strain E24377A / ETEC).